Consider the following 389-residue polypeptide: Nucleic acid dioxygenase ALKBH1 (389 aa).

The interaction with DNAJB6 stretch occupies residues 1-127 (MGKMAAAVAS…CLKLYSQKPN (127 aa)). A tRNA-binding region spans residues 86-389 (SKWRAYGLEG…VKRKRLNPNS (304 aa)). Substrate contacts are provided by residues Trp144 and 175-177 (YHY). The Fe2OG dioxygenase domain occupies 213 to 347 (QAEAGILNYY…RVNMTVRQVL (135 aa)). Position 220–222 (220–222 (NYY)) interacts with 2-oxoglutarate. Fe cation is bound by residues His231, Asp233, and His287. Position 233 (Asp233) interacts with substrate. Residue 338 to 344 (RVNMTVR) participates in 2-oxoglutarate binding.

Monomer. Interacts with DNAJB6. Requires Fe(2+) as cofactor. As to expression, in adult organs, highly expressed in testis, eye, brain and kidney.

Its subcellular location is the nucleus. It catalyses the reaction an N(6)-methyl-2'-deoxyadenosine in DNA + 2-oxoglutarate + O2 = a 2'-deoxyadenosine in DNA + formaldehyde + succinate + CO2. It carries out the reaction 2'-deoxyribonucleotide-(2'-deoxyribose 5'-phosphate)-2'-deoxyribonucleotide-DNA = a 3'-end 2'-deoxyribonucleotide-(2,3-dehydro-2,3-deoxyribose 5'-phosphate)-DNA + a 5'-end 5'-phospho-2'-deoxyribonucleoside-DNA + H(+). The enzyme catalyses a methylated nucleobase within DNA + 2-oxoglutarate + O2 = a nucleobase within DNA + formaldehyde + succinate + CO2. The catalysed reaction is an N(1)-methyladenosine in tRNA + 2-oxoglutarate + O2 = an adenosine in tRNA + formaldehyde + succinate + CO2. It catalyses the reaction 5-methylcytidine(34) in mitochondrial tRNA(Met) + 2 2-oxoglutarate + 2 O2 = 5-formylcytidine(34) in mitochondrial tRNA(Met) + 2 succinate + 2 CO2 + H2O. It carries out the reaction an N(3)-methylcytidine in mRNA + 2-oxoglutarate + O2 = a cytidine in mRNA + formaldehyde + succinate + CO2. The enzyme catalyses N(1)-methyladenosine(58) in tRNA + 2-oxoglutarate + O2 = adenosine(58) in tRNA + formaldehyde + succinate + CO2. In terms of biological role, dioxygenase that acts on nucleic acids, such as DNA and tRNA. Requires molecular oxygen, alpha-ketoglutarate and iron. A number of activities have been described for this dioxygenase, but recent results suggest that it mainly acts on tRNAs and mediates their demethylation or oxidation depending on the context and subcellular compartment. Mainly acts as a tRNA demethylase by removing N(1)-methyladenine from various tRNAs, with a preference for N(1)-methyladenine at position 58 (m1A58) present on a stem loop structure of tRNAs. Acts as a regulator of translation initiation and elongation in response to glucose deprivation: regulates both translation initiation, by mediating demethylation of tRNA(Met), and translation elongation, N(1)-methyladenine-containing tRNAs being preferentially recruited to polysomes to promote translation elongation. In mitochondrion, specifically interacts with mt-tRNA(Met) and mediates oxidation of mt-tRNA(Met) methylated at cytosine(34) to form 5-formylcytosine (f(5)c) at this position. mt-tRNA(Met) containing the f(5)c modification at the wobble position enables recognition of the AUA codon in addition to the AUG codon, expanding codon recognition in mitochondrial translation. Specifically demethylates DNA methylated on the 6th position of adenine (N(6)-methyladenosine) DNA. N(6)-methyladenosine (m6A) DNA is present at some L1 elements in embryonic stem cells and probably promotes their silencing. Demethylates mRNAs containing N(3)-methylcytidine modification. Also able to repair alkylated single-stranded DNA by oxidative demethylation, but with low activity. Also has DNA lyase activity and introduces double-stranded breaks at abasic sites: cleaves both single-stranded DNA and double-stranded DNA at abasic sites, with the greatest activity towards double-stranded DNA with two abasic sites. DNA lyase activity does not require alpha-ketoglutarate and iron and leads to the formation of an irreversible covalent protein-DNA adduct with the 5' DNA product. DNA lyase activity is not required during base excision repair and class switch recombination of the immunoglobulin heavy chain during B lymphocyte activation. May play a role in placental trophoblast lineage differentiation. This chain is Nucleic acid dioxygenase ALKBH1, found in Mus musculus (Mouse).